A 519-amino-acid chain; its full sequence is Membrane-bound glycerophospholipid O-acyltransferase 2 (519 aa).

A run of 6 helical transmembrane segments spans residues 22-42 (PIDQVNFVVCQLFALLAAVWF), 61-81 (TLLGLYLAFFCFGWYALHFLV), 88-108 (CIMIIAGVESMHQCCFVFALG), 184-204 (FMGILAGPLCSYKDYIAFIEG), 236-256 (LLVCGLSLLFHLTISSMLPVE), and 288-305 (YFAWTLADAINNAAGFGF). Residues Asn341 and His372 contribute to the active site. 3 helical membrane-spanning segments follow: residues 365–385 (FFLSAIWHGVYPGYYLTFLTG), 415–435 (IITWAATQITISYTVVPFVLL), and 443–463 (FYRSWYYCLHICSILVLLLLP).

It belongs to the membrane-bound acyltransferase family.

Its subcellular location is the endoplasmic reticulum membrane. The enzyme catalyses a 1-acyl-sn-glycero-3-phosphocholine + an acyl-CoA = a 1,2-diacyl-sn-glycero-3-phosphocholine + CoA. It carries out the reaction a 1-acyl-sn-glycero-3-phosphoethanolamine + an acyl-CoA = a 1,2-diacyl-sn-glycero-3-phosphoethanolamine + CoA. It catalyses the reaction a 1-acyl-sn-glycero-3-phosphate + an acyl-CoA = a 1,2-diacyl-sn-glycero-3-phosphate + CoA. The catalysed reaction is (9Z)-hexadecenoyl-CoA + 1-hexadecanoyl-sn-glycero-3-phosphocholine = 1-hexadecanoyl-2-(9Z-hexadecenoyl)-sn-glycero-3-phosphocholine + CoA. The enzyme catalyses 1-hexadecanoyl-sn-glycero-3-phosphoethanolamine + (9Z)-octadecenoyl-CoA = 1-hexadecanoyl-2-(9Z-octadecenoyl)-sn-glycero-3-phosphoethanolamine + CoA. It carries out the reaction 1-hexadecanoyl-sn-glycero-3-phosphoethanolamine + (9Z)-hexadecenoyl-CoA = 1-hexadecanoyl-2-(9Z)-hexadecenoyl-sn-glycero-3-phosphoethanolamine + CoA. It catalyses the reaction 1-(9Z-octadecenoyl)-sn-glycero-3-phospho-L-serine + hexadecanoyl-CoA = 1-(9Z)-octadecenoyl-2-hexadecanoyl-sn-glycero-3-phosphoserine + CoA. The catalysed reaction is (9Z,12Z)-octadecadienoyl-CoA + 1-hexadecanoyl-sn-glycero-3-phosphocholine = 1-hexadecanoyl-2-(9Z,12Z-octadecadienoyl)-sn-glycero-3-phosphocholine + CoA. The enzyme catalyses 1-hexadecanoyl-sn-glycero-3-phosphocholine + (9Z)-octadecenoyl-CoA = 1-hexadecanoyl-2-(9Z-octadecenoyl)-sn-glycero-3-phosphocholine + CoA. It carries out the reaction 1-hexadecanoyl-sn-glycero-3-phosphate + (9Z)-hexadecenoyl-CoA = 1-hexadecanoyl-2-[(9Z)-hexadec-9-enoyl]-sn-glycero-3-phosphate + CoA. It catalyses the reaction 1-hexadecanoyl-sn-glycero-3-phosphate + (9Z)-octadecenoyl-CoA = 1-hexadecanoyl-2-(9Z-octadecenoyl)-sn-glycero-3-phosphate + CoA. The catalysed reaction is a 1-O-(1Z-alkenyl)-sn-glycero-3-phosphocholine + (9Z)-octadecenoyl-CoA = 1-O-(1Z)-alkenyl-2-(9Z)-octadecenoyl-sn-glycero-3-phosphocholine + CoA. The enzyme catalyses a 1-O-(1Z-alkenyl)-sn-glycero-3-phosphoethanolamine + (9Z)-octadecenoyl-CoA = 1-O-(1Z)-alkenyl-2-(9Z)-octadecenoyl-sn-glycero-3-phosphoethanolamine + CoA. It carries out the reaction 1-octadecanoyl-sn-glycero-3-phosphoethanolamine + (9Z)-octadecenoyl-CoA = 1-octadecanoyl-2-(9Z-octadecenoyl)-sn-glycero-3-phosphoethanolamine + CoA. It catalyses the reaction 1-octadecanoyl-sn-glycero-3-phosphocholine + (9Z)-octadecenoyl-CoA = 1-octadecanoyl-2-(9Z-octadecenoyl)-sn-glycero-3-phosphocholine + CoA. The catalysed reaction is 1-(9Z-octadecenoyl)-sn-glycero-3-phosphoethanolamine + (9Z)-octadecenoyl-CoA = 1,2-di-(9Z-octadecenoyl)-sn-glycero-3-phosphoethanolamine + CoA. It functions in the pathway lipid metabolism; phospholipid metabolism. Partially inhibited by thimerosal. Functionally, acyltransferase which catalyzes the transfer of an acyl group from an acyl-CoA to a lysophospholipid leading to the production of a phospholipid and participates in the reacylation step of the phospholipid remodeling pathway also known as the Lands cycle. May catalyze preferentially the acylation of lysophosphatidylethanolamine (1-acyl-sn-glycero-3-phosphoethanolamine or LPE) and lysophosphatidic acid (LPA) and to a lesser extend lysophosphatidylcholine (LPC) and lysophosphatidylserine (LPS). Prefers oleoyl-CoA as the acyl donor. May be involved in chondrocyte differentiation. The chain is Membrane-bound glycerophospholipid O-acyltransferase 2 from Rattus norvegicus (Rat).